Reading from the N-terminus, the 254-residue chain is Large ribosomal subunit protein uL4 (254 aa).

The tract at residues 45-70 (PWGNDPEAGKRTSAKGWGSGRGTARV) is disordered.

Belongs to the universal ribosomal protein uL4 family. As to quaternary structure, part of the 50S ribosomal subunit.

Its function is as follows. One of the primary rRNA binding proteins, this protein initially binds near the 5'-end of the 23S rRNA. It is important during the early stages of 50S assembly. It makes multiple contacts with different domains of the 23S rRNA in the assembled 50S subunit and ribosome. Forms part of the polypeptide exit tunnel. The sequence is that of Large ribosomal subunit protein uL4 from Methanobrevibacter smithii (strain ATCC 35061 / DSM 861 / OCM 144 / PS).